The sequence spans 712 residues: Autophagy-related protein 13 (712 aa).

Disordered regions lie at residues 388–443 (AGST…ETPP) and 568–611 (GSVG…DDDE). Residues 402–415 (SSVGSGSKYSSSFG) are compositionally biased toward low complexity. The segment at 412–420 (SSFGRIRRH) is ATG17-binding. Over residues 424–439 (RRSESIDRTAKPRKSN) the composition is skewed to basic and acidic residues. Residues 441 to 500 (TPPEDLLEFVKLLEDKKELNMKPSTILPQQDISSSLIKFQSMKPNNDTLSDNLSMSMSID) are ATG1-binding. Acidic residues predominate over residues 576-585 (TNEDSKEDED).

Belongs to the ATG13 family. Fungi subfamily. In terms of assembly, hypophosphorylated form interacts with ATG1 to form the ATG1-ATG13 kinase complex. The ATG1-ATG13 complex interacts with the ATG17-ATG29-ATG31 complex through direct interaction with ATG17. Interacts with VAC8. In terms of processing, hyperphosphorylated under nutrient-rich conditions. Starvation and TOR inactivation results in ATG13 partial dephosphorylation leading to ATG1-binding. Dephosphorylation induces ATG17-binding.

Its subcellular location is the cytoplasm. It localises to the preautophagosomal structure. Its function is as follows. Activates the ATG1 kinase in a nutritional condition dependent manner through the TOR pathway, leading to autophagy. Involved in ATG9 and ATG23 cycling through the pre-autophagosomal structure. Also involved in cytoplasm to vacuole transport (Cvt) and more specifically in Cvt vesicle formation. Seems to play a role in the switching machinery regulating the conversion between the Cvt pathway and autophagy. Finally, ATG13 is also required for glycogen storage during stationary phase. The chain is Autophagy-related protein 13 from Kluyveromyces marxianus (strain DMKU3-1042 / BCC 29191 / NBRC 104275) (Yeast).